The chain runs to 416 residues: Enolase (416 aa).

Residue Gln-160 participates in (2R)-2-phosphoglycerate binding. Catalysis depends on Glu-204, which acts as the Proton donor. Residues Asp-239, Glu-280, and Asp-306 each coordinate Mg(2+). Residues Lys-331, Arg-360, Ser-361, and Lys-382 each contribute to the (2R)-2-phosphoglycerate site. Lys-331 (proton acceptor) is an active-site residue.

The protein belongs to the enolase family. Mg(2+) serves as cofactor.

Its subcellular location is the cytoplasm. The protein resides in the secreted. The protein localises to the cell surface. It catalyses the reaction (2R)-2-phosphoglycerate = phosphoenolpyruvate + H2O. The protein operates within carbohydrate degradation; glycolysis; pyruvate from D-glyceraldehyde 3-phosphate: step 4/5. Catalyzes the reversible conversion of 2-phosphoglycerate (2-PG) into phosphoenolpyruvate (PEP). It is essential for the degradation of carbohydrates via glycolysis. The protein is Enolase of Sulfolobus acidocaldarius (strain ATCC 33909 / DSM 639 / JCM 8929 / NBRC 15157 / NCIMB 11770).